Here is a 303-residue protein sequence, read N- to C-terminus: Probable cell division protein WhiA (303 aa).

Residues 272–303 (SIQQVADALEFPITKSGVNHRLRKINKIADDL) constitute a DNA-binding region (H-T-H motif).

This sequence belongs to the WhiA family.

Involved in cell division and chromosome segregation. The chain is Probable cell division protein WhiA from Streptococcus pyogenes serotype M6 (strain ATCC BAA-946 / MGAS10394).